We begin with the raw amino-acid sequence, 391 residues long: 8-amino-7-oxononanoate synthase 1 (391 aa).

A pyridoxal 5'-phosphate-binding site is contributed by 108–109 (GF). Position 133 (His-133) interacts with substrate. Pyridoxal 5'-phosphate contacts are provided by residues Ser-180, 205 to 208 (DDAH), and 236 to 239 (TLSK). The residue at position 239 (Lys-239) is an N6-(pyridoxal phosphate)lysine. Thr-353 lines the substrate pocket.

It belongs to the class-II pyridoxal-phosphate-dependent aminotransferase family. BioF subfamily. In terms of assembly, homodimer. It depends on pyridoxal 5'-phosphate as a cofactor.

The enzyme catalyses 6-carboxyhexanoyl-[ACP] + L-alanine + H(+) = (8S)-8-amino-7-oxononanoate + holo-[ACP] + CO2. Its pathway is cofactor biosynthesis; biotin biosynthesis. In terms of biological role, catalyzes the decarboxylative condensation of pimeloyl-[acyl-carrier protein] and L-alanine to produce 8-amino-7-oxononanoate (AON), [acyl-carrier protein], and carbon dioxide. This Bacillus velezensis (strain DSM 23117 / BGSC 10A6 / LMG 26770 / FZB42) (Bacillus amyloliquefaciens subsp. plantarum) protein is 8-amino-7-oxononanoate synthase 1.